We begin with the raw amino-acid sequence, 119 residues long: MAKSSFKLEHPLERRQAEAARIREKYPDRIPVIVEKAERSDIPDIDKKKYLVPADLTVGQFVYVVRKRIKLSAEKAIFIFVKNILPPTAAMMSAIYEEHKDEDGFLYMTYSGENTFGSF.

Gly-117 carries the Phosphatidylethanolamine amidated glycine lipid modification. A propeptide spans Ser-118 to Phe-119 (removed in mature form).

It belongs to the ATG8 family. Interacts with ATG4. Interacts with the Phytophtora infestans effector PexRD54. Interacts with JOKA2. Post-translationally, the C-terminal 2 residues are removed by ATG4 to expose Gly-117 at the C-terminus. The C-terminal Gly is then amidated with phosphatidylethanolamine by an activating system similar to that for ubiquitin. The phosphatidylethanolamine amidated glycine is required for autophagosome formation.

It localises to the cytoplasmic vesicle. Its subcellular location is the autophagosome membrane. It is found in the vacuole membrane. The protein resides in the cytoplasm. The protein localises to the cytoskeleton. In terms of biological role, ubiquitin-like modifier involved in autophagosomes formation. May mediate the delivery of the autophagosomes to the vacuole via the microtubule cytoskeleton. ATG8CL-mediated selective autophagy contributes to defense against the fungal pathogen Phytophtora infestans. This chain is Autophagy-related protein 8C-like, found in Solanum tuberosum (Potato).